The sequence spans 1458 residues: Probable serine/threonine-protein kinase yakA (1458 aa).

Low complexity predominate over residues 32 to 76; it reads NNSLNSNDNTNTTNNNNNNNNNNNNNNNNNNNNNNNNNINNNNNN. The segment at 32 to 83 is disordered; it reads NNSLNSNDNTNTTNNNNNNNNNNNNNNNNNNNNNNNNNINNNNNNGGMVGVN. Residues 205–548 form the Protein kinase domain; sequence YKVLDSLGQG…PMQAKEHPFI (344 aa). Residues 211–219 and Lys234 each bind ATP; that span reads LGQGTFGQV. Catalysis depends on Asp332, which acts as the Proton acceptor. 2 disordered regions span residues 441-462 and 545-571; these read HRHLGSNSDDNNNNNNNNNGKP and HPFITGQPYNGPFIPDPSKKRHFTYSQ. Positions 446-459 are enriched in low complexity; the sequence is SNSDDNNNNNNNNN. A coiled-coil region spans residues 588 to 643; the sequence is NQHQLFQQLQQQQQQQQQQQQQQQQQQQQQQQQQQQQQQHNQFQQQQQQQQQQQQS. 4 stretches are compositionally biased toward low complexity: residues 659–709, 791–800, 808–853, and 861–870; these read TPYT…SFNF, SWGSDSSSIS, QKQM…NNVN, and DIPSDSFSSS. Disordered regions lie at residues 659 to 714 and 791 to 874; these read TPYT…NESF and SWGS…EGMD. Residues 878 to 927 are a coiled coil; sequence NLYQQQQQQQQQQQQQQQQQQQQQQQQQQQQQQQQQQLQYQQQFQTLQDL. 5 disordered regions span residues 930–1095, 1128–1161, 1233–1347, 1375–1399, and 1435–1458; these read EGEK…PQMI, NQQNTPHLTPSNSSTNLLGKSASSPLKNSSGGAI, DYRP…SYQY, QQQQYKKDTPSLMMSPPMNGLKTSS, and QQLQQQQAPPQNRKQVVIGSYRET. 3 stretches are compositionally biased toward low complexity: residues 961–988, 1016–1042, and 1064–1093; these read QQTNNTQQQQQQQQQQQQQQQQQQQQQQ, QQFQQQQYKQQQKNLHHQQQQQQRFMQ, and QPLHQTYIPQQQQQQQQQQQQSQPTPFTPQ. Polar residues-rich tracts occupy residues 1128–1158 and 1233–1245; these read NQQNTPHLTPSNSSTNLLGKSASSPLKNSSG and DYRPQLFNKQSPP. Low complexity-rich tracts occupy residues 1246–1255 and 1264–1279; these read SSYNSNKSFY and NNNNNNSRPTNQNFSN. Polar residues predominate over residues 1280-1291; that stretch reads SLLPSQQQNVIF. Residues 1292–1309 show a composition bias toward low complexity; the sequence is PQNSPPSSYNSSNSLSKS. Composition is skewed to polar residues over residues 1310–1321 and 1331–1344; these read GGNTVKNNSNTG and QRFNSTNNLLSGGS. Coiled-coil stretches lie at residues 1346-1383 and 1409-1442; these read QYQQQQQQQQQQQQQQQQQQQQQQQQQQQQQQQYKKDT and RYQYQQQQLQQQFQQQQQQQQQQQIQQQLQQQQA.

It belongs to the protein kinase superfamily. CMGC Ser/Thr protein kinase family. MNB/DYRK subfamily.

The protein localises to the cytoplasm. It carries out the reaction L-seryl-[protein] + ATP = O-phospho-L-seryl-[protein] + ADP + H(+). It catalyses the reaction L-threonyl-[protein] + ATP = O-phospho-L-threonyl-[protein] + ADP + H(+). The enzyme catalyses L-tyrosyl-[protein] + ATP = O-phospho-L-tyrosyl-[protein] + ADP + H(+). In terms of biological role, general sensor of environmental conditions, such as heat stress, effecting changes through pkaC. Essential for survival to nitrosoative and oxidative stresses. Required for cell cycle control, not only at the onset but also during development (aggregation process and postaggregative development). This chain is Probable serine/threonine-protein kinase yakA (yakA), found in Dictyostelium discoideum (Social amoeba).